A 337-amino-acid polypeptide reads, in one-letter code: Probable deoxyhypusine synthase (337 aa).

Lysine 308 functions as the Nucleophile in the catalytic mechanism.

The protein belongs to the deoxyhypusine synthase family. The cofactor is NAD(+).

It catalyses the reaction [eIF5A protein]-L-lysine + spermidine = [eIF5A protein]-deoxyhypusine + propane-1,3-diamine. The protein operates within protein modification; eIF5A hypusination. Functionally, catalyzes the NAD-dependent oxidative cleavage of spermidine and the subsequent transfer of the butylamine moiety of spermidine to the epsilon-amino group of a specific lysine residue of the eIF-5A precursor protein to form the intermediate deoxyhypusine residue. This chain is Probable deoxyhypusine synthase, found in Thermococcus kodakarensis (strain ATCC BAA-918 / JCM 12380 / KOD1) (Pyrococcus kodakaraensis (strain KOD1)).